A 362-amino-acid polypeptide reads, in one-letter code: [LysW]-lysine hydrolase (362 aa).

Position 69 (H69) interacts with Zn(2+). Residue D71 is part of the active site. D94 provides a ligand contact to Zn(2+). E127 serves as the catalytic Proton acceptor. 3 residues coordinate Zn(2+): E128, E151, and H334.

This sequence belongs to the peptidase M20A family. LysK subfamily. Zn(2+) serves as cofactor. Co(2+) is required as a cofactor.

The protein resides in the cytoplasm. It catalyses the reaction [amino-group carrier protein]-C-terminal-gamma-(L-lysyl)-L-glutamate + H2O = [amino-group carrier protein]-C-terminal-L-glutamate + L-lysine. It participates in amino-acid biosynthesis; L-lysine biosynthesis via AAA pathway; L-lysine from L-alpha-aminoadipate (Thermus route): step 5/5. Functionally, catalyzes the release of L-lysine from [LysW]-gamma-L-lysine. The protein is [LysW]-lysine hydrolase of Deinococcus radiodurans (strain ATCC 13939 / DSM 20539 / JCM 16871 / CCUG 27074 / LMG 4051 / NBRC 15346 / NCIMB 9279 / VKM B-1422 / R1).